A 474-amino-acid chain; its full sequence is Tumor necrosis factor receptor superfamily member 1B (474 aa).

A signal peptide spans Met1–Thr22. Over Val23–Gly258 the chain is Extracellular. Residue Thr30 is glycosylated (O-linked (GalNAc...) threonine). TNFR-Cys repeat units follow at residues Gln39–Ala77, Asp78–Cys119, Ala120–Ser164, and Ala165–Ala203. Intrachain disulfides connect Cys40-Cys54, Cys55-Cys68, Cys58-Cys76, Cys79-Cys94, Cys97-Cys111, Cys101-Cys119, Cys121-Cys127, Cys136-Cys145, Cys139-Cys163, and Cys166-Cys181. N-linked (GlcNAc...) asparagine glycosylation is present at Asn69. N-linked (GlcNAc...) asparagine glycosylation is present at Asn110. An N-linked (GlcNAc...) asparagine glycan is attached at Asn195. O-linked (GalNAc...) threonine glycans are attached at residues Thr208 and Thr224. A compositionally biased stretch (polar residues) spans Gln220–Pro239. Positions Gln220–Ile241 are disordered. Residues Ile259–Arg288 traverse the membrane as a helical segment. At Lys289 to Pro474 the chain is on the cytoplasmic side. 2 disordered regions span residues Leu321–Gly378 and Ser397–Gly464. Low complexity-rich tracts occupy residues Ala324–Ala338 and Gly366–Gly378. Residue Ser331 is modified to Phosphoserine. A compositionally biased stretch (polar residues) spans Glu429 to Leu442.

Binds to TRAF2. Interacts with BMX. Interacts (activated form) with XPNPEP3.

Its subcellular location is the membrane. Receptor with high affinity for TNFSF2/TNF-alpha and approximately 5-fold lower affinity for homotrimeric TNFSF1/lymphotoxin-alpha. The TRAF1/TRAF2 complex recruits the apoptotic suppressors BIRC2 and BIRC3 to TNFRSF1B/TNFR2. This chain is Tumor necrosis factor receptor superfamily member 1B (Tnfrsf1b), found in Rattus norvegicus (Rat).